A 360-amino-acid polypeptide reads, in one-letter code: C-C chemokine receptor-like 2 (360 aa).

The Extracellular portion of the chain corresponds to 1–42; sequence MDNYTVAPDDEYDVLILDDYLDNSGPDQVPAPEFLSPQQVLQ. A glycan (N-linked (GlcNAc...) asparagine) is linked at Asn3. A helical membrane pass occupies residues 43 to 63; it reads FCCAVFAVGLLDNVLAVFILV. Residues 64-73 are Cytoplasmic-facing; the sequence is KYKGLKNLGN. The chain crosses the membrane as a helical span at residues 74–94; the sequence is IYFLNLALSNLCFLLPLPFWA. The Extracellular portion of the chain corresponds to 95–109; it reads HTAAHGESPGNGTCK. An N-linked (GlcNAc...) asparagine glycan is attached at Asn105. A disulfide bridge links Cys108 with Cys185. A helical transmembrane segment spans residues 110–130; it reads VLVGLHSSGLYSEVFSNILLL. Residues 131–141 are Cytoplasmic-facing; sequence VQGYRVFSQGR. A helical membrane pass occupies residues 142-162; it reads LASIFTTVSCGIVACILAWAM. The Extracellular portion of the chain corresponds to 163–202; it reads ATALSLPESVFYEPRMERQKHKCAFGKPHFLPIEAPLWKY. A helical membrane pass occupies residues 203–223; it reads VLTSKMIILVLAFPLLVFIIC. Topologically, residues 224 to 243 are cytoplasmic; the sequence is CRQLRRRQSFRERQYDLHKP. Residues 244-264 form a helical membrane-spanning segment; sequence ALVITGVFLLMWAPYNTVLFL. The Extracellular portion of the chain corresponds to 265-285; the sequence is SAFQEHLSLQDEKSSYHLDAS. The helical transmembrane segment at 286–307 threads the bilayer; that stretch reads VQVTQLVATTHCCVNPLLYLLL. Residues 308–360 are Cytoplasmic-facing; it reads DRKAFMRYLRSLFPRCNDIPYQSSGGYQQAPPREGHGRPIELYSNLHQRQDII.

Belongs to the G-protein coupled receptor 1 family. In terms of tissue distribution, expressed in macrophages, astrocytes, in glial cells. Constitutively expressed by mast cells. Detected in bronchial epithelium in OVA-induced airway inflammation. Up-regulated during dendritic cell (DC) maturation.

Its subcellular location is the cell membrane. Functionally, receptor for CCL19 and chemerin/RARRES2. Does not appear to be a signaling receptor, but may have a role in modulating chemokine-triggered immune responses by capturing and internalizing CCL19 or by presenting RARRES2 ligand to CMKLR1, a functional signaling receptor. Plays a critical role for the development of Th2 responses. This chain is C-C chemokine receptor-like 2 (Ccrl2), found in Mus musculus (Mouse).